The primary structure comprises 196 residues: Interleukin-23 subunit alpha (196 aa).

The signal sequence occupies residues 1 to 21 (MLDCRAVIMLWLLPWVTQGLA).

It belongs to the IL-6 superfamily. In terms of assembly, heterodimer with IL12B; disulfide-linked. The heterodimer is known as interleukin IL-23. Interacts with IL23R; this interaction enables recruitment of IL12RB1. In terms of tissue distribution, secreted by activated dendritic cells (at protein level). Detected in various tissues with higher expression in polarized Th1 cells and activated macrophages.

The protein localises to the secreted. Its function is as follows. Associates with IL12B to form the IL-23 interleukin, a heterodimeric cytokine which functions in innate and adaptive immunity. IL-23 may constitute with IL-17 an acute response to infection in peripheral tissues. IL-23 binds to a heterodimeric receptor complex composed of IL12RB1 and IL23R, activates the Jak-Stat signaling cascade, stimulates memory rather than naive T-cells and promotes production of pro-inflammatory cytokines. IL-23 induces autoimmune inflammation and thus may be responsible for autoimmune inflammatory diseases and may be important for tumorigenesis. In terms of biological role, associates with IL12B to form the pro-inflammatory cytokine IL-23 that plays different roles in innate and adaptive immunity. Released by antigen-presenting cells such as dendritic cells or macrophages, binds to a heterodimeric receptor complex composed of IL12RB1 and IL23R to activate JAK2 and TYK2 which then phosphorylate the receptor to form a docking site leading to the phosphorylation of STAT3 and STAT4. This process leads to activation of several pathways including p38 MAPK or NF-kappa-B and promotes the production of pro-inflammatory cytokines such as interleukin-17A/IL17A. In turn, participates in the early and effective intracellular bacterial clearance. Promotes the expansion and survival of T-helper 17 cells, a CD4-positive helper T-cell subset that produces IL-17, as well as other IL-17-producing cells. The polypeptide is Interleukin-23 subunit alpha (Il23a) (Mus musculus (Mouse)).